The following is a 41-amino-acid chain: Alpha-conotoxin CIB (41 aa).

Positions 1–21 are excised as a propeptide; it reads SDGRNEAANDEASDVIELALK. 2 disulfides stabilise this stretch: Cys-23/Cys-29 and Cys-24/Cys-37. A ser-Xaa-Pro motif, crucial for potent interaction with nAChR region spans residues 25 to 27; the sequence is SNP. Position 37 is a cysteine amide (Cys-37).

It belongs to the conotoxin A superfamily. As to expression, expressed by the venom duct.

It is found in the secreted. Its function is as follows. Alpha-conotoxins act on postsynaptic membranes, they bind to the nicotinic acetylcholine receptors (nAChR) and thus inhibit them. This toxin blocks rat neuronal nAChR alpha-3-beta-2/CHRNA3-CHRNB2 (IC(50)=128.9 nM) and alpha-7/CHRNA7 (IC(50)=1511 nM). In vivo, intramuscular injection into zebrafish does not produce any effect on the locomotion of zebrafish. The sequence is that of Alpha-conotoxin CIB from Conus catus (Cat cone).